A 152-amino-acid chain; its full sequence is 2-C-methyl-D-erythritol 2,4-cyclodiphosphate synthase (152 aa).

Aspartate 8 and histidine 10 together coordinate a divalent metal cation. Residues 8–10 (DSH) and 34–35 (HS) each bind 4-CDP-2-C-methyl-D-erythritol 2-phosphate. Histidine 42 serves as a coordination point for a divalent metal cation. Residues 56–58 (DIG), 61–65 (FPDTD), 100–106 (LDRPKLG), and 131–135 (FKTSE) each bind 4-CDP-2-C-methyl-D-erythritol 2-phosphate.

It belongs to the IspF family. Homotrimer. A divalent metal cation serves as cofactor.

It carries out the reaction 4-CDP-2-C-methyl-D-erythritol 2-phosphate = 2-C-methyl-D-erythritol 2,4-cyclic diphosphate + CMP. Its pathway is isoprenoid biosynthesis; isopentenyl diphosphate biosynthesis via DXP pathway; isopentenyl diphosphate from 1-deoxy-D-xylulose 5-phosphate: step 4/6. Its function is as follows. Involved in the biosynthesis of isopentenyl diphosphate (IPP) and dimethylallyl diphosphate (DMAPP), two major building blocks of isoprenoid compounds. Catalyzes the conversion of 4-diphosphocytidyl-2-C-methyl-D-erythritol 2-phosphate (CDP-ME2P) to 2-C-methyl-D-erythritol 2,4-cyclodiphosphate (ME-CPP) with a corresponding release of cytidine 5-monophosphate (CMP). This chain is 2-C-methyl-D-erythritol 2,4-cyclodiphosphate synthase, found in Thermus thermophilus (strain ATCC 27634 / DSM 579 / HB8).